The following is a 975-amino-acid chain: Kinesin-like protein KIN-14K (975 aa).

A disordered region spans residues 1–40 (MKNRIKKGSSMIGVYGRSDGSSSIQSSNGSESRESIDDNK). The segment covering 17–30 (RSDGSSSIQSSNGS) has biased composition (low complexity). The segment covering 31–40 (ESRESIDDNK) has biased composition (basic and acidic residues). Positions 40 to 143 (KQGHQSLVEW…SLKALKASFS (104 aa)) constitute a Calponin-homology (CH) domain. A coiled-coil region spans residues 289–345 (KERSNAELSKLKQELEIVKETHEKQFLELKLNAQKAKVELERQVKNSELRVVEAKEL). Residues 436–746 (NIRVYCRIRP…LKFAERVSGV (311 aa)) enclose the Kinesin motor domain. Residue 520–527 (GQTGSGKT) participates in ATP binding. Residues 757–788 (GRDVRQLMEQVSNLKDMIAKKDEELQKFQNIN) adopt a coiled-coil conformation. Disordered regions lie at residues 801 to 852 (VSPP…GAKD) and 900 to 975 (LFPE…NRKR). A compositionally biased stretch (low complexity) spans 944-958 (LSISTTSSKALTSSK).

It belongs to the TRAFAC class myosin-kinesin ATPase superfamily. Kinesin family. KIN-14 subfamily.

This chain is Kinesin-like protein KIN-14K, found in Arabidopsis thaliana (Mouse-ear cress).